The chain runs to 235 residues: MPKLSKRLAGLASKIEDRTYGPLEAIALVKDNANAKFDETMEAHVRLGIDPKYTDQQLRTTVALPNGTGQTVRIAVVTSGEKVAAAKAAGAELAGDEDLVEAISKGEMNFDLLIATPDMMPKVAKLGRVLGPRGLMPNPKAGTVTTDLAAAIKDFKAGKLEFRADRTGIVHVRFGKASFTADALLENLKTLQETIDRNKPSGAKGRYWKSLYVTSTMGPSVEVDFSALQEIGQEG.

It belongs to the universal ribosomal protein uL1 family. Part of the 50S ribosomal subunit.

Its function is as follows. Binds directly to 23S rRNA. The L1 stalk is quite mobile in the ribosome, and is involved in E site tRNA release. Protein L1 is also a translational repressor protein, it controls the translation of the L11 operon by binding to its mRNA. This Synechococcus sp. (strain CC9902) protein is Large ribosomal subunit protein uL1.